Reading from the N-terminus, the 477-residue chain is UDP-N-acetylmuramate--L-alanine ligase (477 aa).

An ATP-binding site is contributed by 122–128 (GTHGKTT).

This sequence belongs to the MurCDEF family.

Its subcellular location is the cytoplasm. It catalyses the reaction UDP-N-acetyl-alpha-D-muramate + L-alanine + ATP = UDP-N-acetyl-alpha-D-muramoyl-L-alanine + ADP + phosphate + H(+). It functions in the pathway cell wall biogenesis; peptidoglycan biosynthesis. Its function is as follows. Cell wall formation. In Xanthomonas oryzae pv. oryzae (strain MAFF 311018), this protein is UDP-N-acetylmuramate--L-alanine ligase.